A 313-amino-acid chain; its full sequence is DNA-directed RNA polymerase subunit alpha (313 aa).

The tract at residues 1–226 is alpha N-terminal domain (alpha-NTD); that stretch reads MLEIEKPKIE…EHMRLFLGLT (226 aa). The segment at 242–313 is alpha C-terminal domain (alpha-CTD); that stretch reads TRDRLMDMSI…LGLSLRSSEE (72 aa).

The protein belongs to the RNA polymerase alpha chain family. As to quaternary structure, homodimer. The RNAP catalytic core consists of 2 alpha, 1 beta, 1 beta' and 1 omega subunit. When a sigma factor is associated with the core the holoenzyme is formed, which can initiate transcription.

The enzyme catalyses RNA(n) + a ribonucleoside 5'-triphosphate = RNA(n+1) + diphosphate. DNA-dependent RNA polymerase catalyzes the transcription of DNA into RNA using the four ribonucleoside triphosphates as substrates. This Moorella thermoacetica (strain ATCC 39073 / JCM 9320) protein is DNA-directed RNA polymerase subunit alpha.